The primary structure comprises 192 residues: PBAN-type neuropeptides (192 aa).

A signal peptide spans 1 to 23; it reads MYKTNIVFNVLALALFSIFFASC. Leucine amide is present on L47. A propeptide spanning residues 51–94 is cleaved from the precursor; it reads SMKPSTEDNRQTFLRLLEAADALKFYYDQLPYERQADEPETKVT. Leucine amide occurs at positions 103, 122, 158, and 168. Residues 171 to 192 constitute a propeptide that is removed on maturation; it reads ELSYDYPTKYRVARSVNKTMDN.

Belongs to the pyrokinin family. As to expression, expression is restricted to the subesophageal ganglion.

Its subcellular location is the secreted. A hormone that controls sex pheromone production in females and pheromone responsiveness in male. Also mediates visceral muscle contractile activity (myotropic activity). Identical to MRCH which is implicated in the formation of both melanin in the cuticle and ommochrome in the epidermis of armyworm species. Functionally, diapause hormone (DH) is responsible for induction of embryonic diapause. In terms of biological role, the three SGNPS are far less active than DH in inducing diapause eggs. Beta-SGNP expressed higher pban activity than PBAN-I, but alpha- and gamma-SGNP were far less active in pheromonotropic activity. The protein is PBAN-type neuropeptides of Bombyx mori (Silk moth).